We begin with the raw amino-acid sequence, 367 residues long: Flagellin 2 (367 aa).

This sequence belongs to the bacterial flagellin family.

It is found in the secreted. It localises to the bacterial flagellum. Flagellin is the subunit protein which polymerizes to form the filaments of bacterial flagella. This is Flagellin 2 (fliC2) from Proteus mirabilis.